Reading from the N-terminus, the 723-residue chain is Aminodeoxychorismate synthase (723 aa).

The 194-residue stretch at 2–195 (RTLLVDNYDS…RDLTERHGRT (194 aa)) folds into the Glutamine amidotransferase type-1 domain. Residue C82 is the Nucleophile of the active site. Residues 96-117 (VGRAPEPRHGRTSAVRHDGTGL) form a disordered region. Residues 98 to 114 (RAPEPRHGRTSAVRHDG) show a composition bias toward basic and acidic residues. Active-site residues include H169 and E171. 2 disordered regions span residues 192 to 219 (HGRT…KATT) and 693 to 723 (FPGR…VLPG). Residues 255 to 723 (LDSSRPGGEL…GAPKDLVLPG (469 aa)) are PABB component. Residues 695 to 704 (GRERPGKDLD) are compositionally biased toward basic and acidic residues.

The protein in the C-terminal section; belongs to the anthranilate synthase component I family.

The catalysed reaction is chorismate + L-glutamine = 4-amino-4-deoxychorismate + L-glutamate. It participates in antibiotic biosynthesis; candicidin biosynthesis. In terms of biological role, involved in candicidin biosynthesis. Catalyzes the biosynthesis of 4-amino-4-deoxychorismate (ADC) from chorismate and glutamine. This is Aminodeoxychorismate synthase from Streptomyces griseus.